Consider the following 352-residue polypeptide: Neuronal growth regulator 1 (352 aa).

Residues 1 to 35 form the signal peptide; the sequence is MVPLVRGAGGSHQWLAAVLLGLCCLLPAGRLAAPG. 3 consecutive Ig-like C2-type domains span residues 36–132, 137–219, and 223–311; these read GDFP…VHLT, PKIF…KVTV, and PTIQ…LPLN. Cys-58 and Cys-116 are joined by a disulfide. N-linked (GlcNAc...) asparagine glycans are attached at residues Asn-71 and Asn-153. 2 cysteine pairs are disulfide-bonded: Cys-158-Cys-201 and Cys-243-Cys-295. N-linked (GlcNAc...) asparagine glycosylation is found at Asn-273, Asn-284, Asn-292, and Asn-305. The GPI-anchor amidated glycine moiety is linked to residue Gly-322. A propeptide spans 323–352 (removed in mature form); that stretch reads DAEVLFSCWYLVLTLSSLTSIFYLKNIILH.

It belongs to the immunoglobulin superfamily. IgLON family. As to quaternary structure, interacts with CEPU-1 and LAMP. Glycosylated. Expressed in embryonic retina, telencephalon, tectum, cerebellum and diencephalon (at protein level).

The protein localises to the cell membrane. In terms of biological role, may be involved in cell-adhesion. May participate in the regulation of neurite outgrowth in the developing brain. This Gallus gallus (Chicken) protein is Neuronal growth regulator 1 (NEGR1).